Here is a 358-residue protein sequence, read N- to C-terminus: MKKYEIAIIKGDGIGPEIVDEAKKVLDAISYSHGFELSYHDYLMGGIAVDRAGVPLPDETIEGCLRADAVLFGAIGGEKWDSLPRELRPESGLLKLRKSLEIFANLRPTVVYDELIEASTLKESVIKGVDILVVRELIGGIYFGEPKGREGDKAFNTMVYSVPEIERIAHVAFKAAMRRQKRVCSVDKANVLDVSQLWRETVTRIAKEYPEVELSHMYIDNAAMQLIRNPKQFDVILTGNLFGDILSDEASMLSGSIGLLPSASIGGKAALYEPIHGSAPDIAGQGIANPIATIASASMMLRHSLGEVEAADAIDKAIVKTLKEGYRTKDIAAFGAKEICTTDEMGSIIANYAAKKGE.

Position 77–90 (77–90 (GEKWDSLPRELRPE)) interacts with NAD(+). Residues R97, R107, R135, and D220 each coordinate substrate. D220, D244, and D248 together coordinate Mg(2+). 277-289 (GSAPDIAGQGIAN) lines the NAD(+) pocket.

Belongs to the isocitrate and isopropylmalate dehydrogenases family. LeuB type 1 subfamily. As to quaternary structure, homodimer. The cofactor is Mg(2+). Requires Mn(2+) as cofactor.

Its subcellular location is the cytoplasm. The enzyme catalyses (2R,3S)-3-isopropylmalate + NAD(+) = 4-methyl-2-oxopentanoate + CO2 + NADH. It functions in the pathway amino-acid biosynthesis; L-leucine biosynthesis; L-leucine from 3-methyl-2-oxobutanoate: step 3/4. In terms of biological role, catalyzes the oxidation of 3-carboxy-2-hydroxy-4-methylpentanoate (3-isopropylmalate) to 3-carboxy-4-methyl-2-oxopentanoate. The product decarboxylates to 4-methyl-2 oxopentanoate. The polypeptide is 3-isopropylmalate dehydrogenase (Wolinella succinogenes (strain ATCC 29543 / DSM 1740 / CCUG 13145 / JCM 31913 / LMG 7466 / NCTC 11488 / FDC 602W) (Vibrio succinogenes)).